Here is a 763-residue protein sequence, read N- to C-terminus: Cadherin-like protein 26 (763 aa).

An N-terminal signal peptide occupies residues 1 to 20; sequence MDTRGCAWLLLLLSLPQGQS. Cadherin domains lie at 21–140, 141–250, 251–371, and 370–478; these read HQPL…APQF, PEKE…MPTF, MEDR…PPAF, and AFHP…APTL. Residues 21–590 lie on the Extracellular side of the membrane; that stretch reads HQPLHRSKRR…SECEEPSDTW (570 aa). Residues Asn-56, Asn-60, and Asn-146 are each glycosylated (N-linked (GlcNAc...) asparagine). N-linked (GlcNAc...) asparagine glycans are attached at residues Asn-394 and Asn-440. Residues 591–611 form a helical membrane-spanning segment; it reads LLWWALSPVGAALMVLSAALL. Topologically, residues 612 to 763 are cytoplasmic; the sequence is CLLRCSCTFG…AMCFTSRVPS (152 aa).

As to quaternary structure, homodimer. Component of a cadherin:catenin adhesion complex composed of at least of CDH26, beta-catenin/CTNNB1, alpha-catenin/CTNNA1 and p120 catenin/CTNND1. Post-translationally, N-glycosylated.

Its subcellular location is the cell membrane. Functionally, cadherins are calcium-dependent cell adhesion proteins. They preferentially interact with themselves in a homophilic manner in connecting cells; cadherins may thus contribute to the sorting of heterogeneous cell types. Ligand for integrins alpha-E/beta-7, ITGAE:ITGAB7, alpha-4/beta-7, ITGA4:ITGAB7 and alpha-4/beta-1, ITGA4:ITGAB1 through which modulates CD4(+) T cells activation. The protein is Cadherin-like protein 26 (Cdh26) of Mus musculus (Mouse).